We begin with the raw amino-acid sequence, 281 residues long: Large ribosomal subunit protein uL2 (281 aa).

Residues 224-281 form a disordered region; that stretch reads RGSAMNPNDHPHGGGEGHQPIGRKSPMTPWGKKALGVKTRKTKKASNQFIIRRRKESK.

This sequence belongs to the universal ribosomal protein uL2 family. Part of the 50S ribosomal subunit. Forms a bridge to the 30S subunit in the 70S ribosome.

Functionally, one of the primary rRNA binding proteins. Required for association of the 30S and 50S subunits to form the 70S ribosome, for tRNA binding and peptide bond formation. It has been suggested to have peptidyltransferase activity; this is somewhat controversial. Makes several contacts with the 16S rRNA in the 70S ribosome. The sequence is that of Large ribosomal subunit protein uL2 from Metamycoplasma arthritidis (strain 158L3-1) (Mycoplasma arthritidis).